A 194-amino-acid chain; its full sequence is Large ribosomal subunit protein uL6x (194 aa).

A Phosphothreonine modification is found at T75.

It belongs to the universal ribosomal protein uL6 family.

The chain is Large ribosomal subunit protein uL6x (RPL9D) from Arabidopsis thaliana (Mouse-ear cress).